We begin with the raw amino-acid sequence, 456 residues long: Zinc finger protein 25 (456 aa).

Residues 8–79 form the KRAB domain; that stretch reads VTLKDVIVEF…EVEFPHRGFP (72 aa). C2H2-type zinc fingers lie at residues 118–140, 146–168, 174–196, 202–224, 230–252, 258–280, 286–308, 314–336, 342–364, 370–392, 398–420, and 426–448; these read CECK…QHTH, YDCD…QKIH, YECK…LRTH, YECN…QKTH, FECT…QKTH, YECK…QRMH, YKCK…QRSH, YECK…QRTH, FECN…QRKH, YECT…QRTH, YACK…QRKH, and YECQ…QKTH.

The protein belongs to the krueppel C2H2-type zinc-finger protein family.

It localises to the nucleus. May be involved in transcriptional regulation. This is Zinc finger protein 25 (ZNF25) from Homo sapiens (Human).